Here is a 657-residue protein sequence, read N- to C-terminus: MPRYTVHVRGEWLAVPCQDAQLTVGWLGREAVRRYIKNKPDNGGFTSVDDAHFLVRRCKGLGLLDNEDRLEVALENNEFVEVVIEGDAMSPDFIPSQPEGVYLYSKYREPEKYIELDGDRLTTEDLVNLGKGRYKIKLTPTAEKRVQKSREVIDSIIKEKTVVYGITTGFGKFARTVIPINKLQELQVNLVRSHSSGVGKPLSPERCRMLLALRINVLAKGYSGISLETLKQVIEMFNASCLPYVPEKGTVGASGDLAPLSHLALGLVGEGKMWSPKSGWADAKYVLEAHGLKPVILKPKEGLALINGTQMITSLGCEAVERASAIARQADIVAALTLEVLKGTTKAFDTDIHALRPHRGQIEVAFRFRSLLDSDHHPSEIAESHRFCDRVQDAYTLRCCPQVHGVVNDTIAFVKNIITTELNSATDNPMVFANRGETVSGGNFHGEYPAKALDYLAIGIHELAAISERRIERLCNPSLSELPAFLVAEGGLNSGFMIAHCTAAALVSENKALCHPSSVDSLSTSAATEDHVSMGGWAARKALRVIEHVEQVLAIELLAACQGIEFLRPLKTTTPLEKVYDLVRSVVRPWIKDRFMAPDIEAAHRLLLEQKVWEVAAPYIEKYRMEHIPESRPLSPTAFSLQFLHKKSTKIPESEDL.

Positions 253 to 255 (ASG) form a cross-link, 5-imidazolinone (Ala-Gly). The residue at position 254 (serine 254) is a 2,3-didehydroalanine (Ser). The residue at position 396 (threonine 396) is a Phosphothreonine. Serine 635 bears the Phosphoserine mark. At threonine 637 the chain carries Phosphothreonine. Serine 648 carries the phosphoserine modification.

Belongs to the PAL/histidase family. Contains an active site 4-methylidene-imidazol-5-one (MIO), which is formed autocatalytically by cyclization and dehydration of residues Ala-Ser-Gly.

It carries out the reaction L-histidine = trans-urocanate + NH4(+). The protein operates within amino-acid degradation; L-histidine degradation into L-glutamate; N-formimidoyl-L-glutamate from L-histidine: step 1/3. This is Histidine ammonia-lyase (HAL) from Homo sapiens (Human).